A 1460-amino-acid chain; its full sequence is CLIP-associating protein 1-A (1460 aa).

HEAT repeat units lie at residues 87–124 (TQLG…QASN) and 163–200 (LTLS…HVGE). The segment at 237 to 293 (SDKNFDDEDSVDGNRPSSASSSASSKAPQTARRGVSLGTARRPGPSSAAAKTGGTAK) is disordered. Residues 279 to 293 (PGPSSAAAKTGGTAK) show a composition bias toward low complexity. HEAT repeat units lie at residues 407–442 (HGAE…IRHT) and 443–479 (HVPR…EWQT). Disordered regions lie at residues 545–605 (SDSI…IDVN), 640–733 (IRTR…RFGI), and 778–800 (PYGM…ERSY). Residues 550 to 569 (SLPQSDRSSSSSQESLNRPL) are compositionally biased toward low complexity. Positions 571 to 597 (TKRSPTGSTVSRASSTTSKSTPGSLQR) are enriched in polar residues. The span at 645–659 (QSSGSTTSTASTPAD) shows a compositional bias: low complexity. Polar residues-rich tracts occupy residues 669-681 (VSQS…SNSP) and 715-724 (QGCSRETSPS). A compositionally biased stretch (low complexity) spans 789-800 (SDASSACSERSY). The HEAT 5 repeat unit spans residues 942-979 (FIVDQTQTPNLKVKVAILKYIESLARQMDPTDFVNSSE). The tract at residues 1041–1084 (LKNSSNSSMGSPSNTIGRTPSRHSSSRASPLTSPTNCSHGGLSP) is disordered. The span at 1042 to 1054 (KNSSNSSMGSPSN) shows a compositional bias: low complexity. Residues 1066 to 1078 (SRASPLTSPTNCS) show a composition bias toward polar residues. 2 HEAT repeats span residues 1272–1309 (LLLE…YAEL) and 1390–1427 (GLLQ…YLAQ).

Belongs to the CLASP family.

Its subcellular location is the cytoplasm. The protein localises to the cytoskeleton. It is found in the microtubule organizing center. It localises to the centrosome. The protein resides in the chromosome. Its subcellular location is the centromere. The protein localises to the kinetochore. It is found in the spindle. It localises to the golgi apparatus. The protein resides in the trans-Golgi network. Functionally, microtubule plus-end tracking protein that promotes the stabilization of dynamic microtubules during anaphase. Plays a crucial role in chromatin-induced microtubule formation. May also act at microtubule minus ends. May be involved in the nucleation of noncentrosomal microtubules originating from the trans-Golgi network (TGN). The sequence is that of CLIP-associating protein 1-A (clasp1-a) from Xenopus laevis (African clawed frog).